The primary structure comprises 1014 residues: Resistance to glucose repression protein 1 (1014 aa).

Positions 1 to 63 (MSTNLANYFA…AVQAKNDDDF (63 aa)) are disordered. Ser-2 carries the post-translational modification N-acetylserine. Over residues 11-34 (GKKDIENEHVNRNASHESNSKSDV) the composition is skewed to basic and acidic residues. A Phosphothreonine modification is found at Thr-73. Ser-75 is subject to Phosphoserine. Disordered regions lie at residues 90-144 (LGRS…YLIP) and 236-270 (SEGNAQSEEEHDLERGYGSDDENSKRISMPTKNSK). Positions 104–115 (YDNSSNNSSSNS) are enriched in low complexity. 2 positions are modified to phosphoserine: Ser-242 and Ser-254. The segment covering 247-260 (DLERGYGSDDENSK) has biased composition (basic and acidic residues). The Nuclear localization signal signature appears at 277–283 (KPILKKR). The residue at position 311 (Ser-311) is a Phosphoserine. The segment at 340–463 (YPKESNSSVS…SEKSNKPTKN (124 aa)) is disordered. Polar residues-rich tracts occupy residues 343 to 352 (ESNSSVSLKS), 361 to 370 (STIPNPVGEN), 389 to 407 (HVQNNRSTAQSNKSILENS), and 415 to 455 (LDQN…NPSE). Ser-421 carries the post-translational modification Phosphoserine. Tyr-480 is modified (phosphotyrosine). At Ser-490 the chain carries Phosphoserine. 2 disordered regions span residues 531–557 (EHLNKNTSDDDTSSQSSSSSHSDDEEH) and 570–591 (SDSGVHSPITDNSSVASSTTSR). Ser-570, Ser-572, and Ser-576 each carry phosphoserine. The segment covering 578 to 591 (ITDNSSVASSTTSR) has biased composition (polar residues). A Nuclear localization signal motif is present at residues 595–599 (RPIIK). Phosphoserine is present on residues Ser-610, Ser-614, and Ser-680. A disordered region spans residues 690–897 (SKEKHVPQLH…QSFRIVNNTP (208 aa)). The span at 722–740 (YSSSSDSEQQFIEDSQYNS) shows a compositional bias: low complexity. The span at 741 to 758 (SDDEEEEDDDDQEVDDNH) shows a compositional bias: acidic residues. Composition is skewed to polar residues over residues 770–802 (LGKSGSTNSLYDLAQPSLSSATPQQKNPTNFTG) and 822–833 (RNSSSGNFIFNS). The short motif at 873 to 879 (KKKALPK) is the Nuclear localization signal element. Over residues 884-897 (SDSSQSFRIVNNTP) the composition is skewed to polar residues. Thr-896 is modified (phosphothreonine). At Ser-898 the chain carries Phosphoserine. Basic and acidic residues predominate over residues 959–972 (KKVDSVQTTRKEAS). A disordered region spans residues 959–982 (KKVDSVQTTRKEASLTDSSNESLH). Phosphoserine is present on Ser-980.

As to quaternary structure, interacts with SAK1.

Its subcellular location is the nucleus. Its function is as follows. Involved in RNA processing and negative regulation of glucose repression. Regulates the level of two antigens, P43 and P70. Binds to protein phosphatase type 1. Functions with REG2 and SNF1 protein kinase to regulate growth. Might regulate SNF1 directly or indirectly. The protein is Resistance to glucose repression protein 1 (REG1) of Saccharomyces cerevisiae (strain ATCC 204508 / S288c) (Baker's yeast).